The primary structure comprises 228 residues: D-lyxose/D-mannose isomerase (228 aa).

Residues H103, H105, E110, and H171 each coordinate Mn(2+).

It belongs to the D-lyxose ketol-isomerase family. In terms of assembly, homodimer. The cofactor is Mn(2+).

It carries out the reaction D-lyxose = D-xylulose. The catalysed reaction is D-mannose = D-fructose. In terms of biological role, sugar isomerase that catalyzes the reversible isomerization of D-lyxose to D-xylulose, and D-mannose to D-fructose. Shows optimum activity using D-lyxose as substrate, but can also effectively catalyze the isomerization between D-fructose and D-mannose. Shows lower activity with L-gulose, D-talose and L-ribose. In Serratia proteamaculans, this protein is D-lyxose/D-mannose isomerase.